The following is a 247-amino-acid chain: tRNA pseudouridine synthase A (247 aa).

Aspartate 52 acts as the Nucleophile in catalysis. Residue tyrosine 113 coordinates substrate.

Belongs to the tRNA pseudouridine synthase TruA family. Homodimer.

The enzyme catalyses uridine(38/39/40) in tRNA = pseudouridine(38/39/40) in tRNA. Functionally, formation of pseudouridine at positions 38, 39 and 40 in the anticodon stem and loop of transfer RNAs. This chain is tRNA pseudouridine synthase A, found in Bartonella quintana (strain Toulouse) (Rochalimaea quintana).